Reading from the N-terminus, the 661-residue chain is MNNFSIISEYKPAGDQPKAIDEIIAGLNSKKRSQMLLGITGSGKTFTMANIIARMNRPTLIMAHNKTLAAQIYSEMKLMFPKNAIEYFVSYYDYYQPEAYIARTDTFIEKDSSINEQIDLMRHSATRSLLERRDVIVVSSVSCIYGLGSPNLYYQMTVNLESGKSYPRDKLLSDLVNLQYERNDIGFERGCFRVKGDNIDIFPSHYSDKAWRLSFVGNELEYIHEFDPLTGTKLAKLDKAMVFGNSHFVIPQETVNKAISEIEVELQKRLELLKSQNKILETQRLNQRTQYDLEMLTTTGSCKGIENYSRFLTGRNAGEPPPTLFEYLPKDALLFVDESHVSVPQIRAMYNGDRARKKVLVEHGFRLPSALDNRPLKFEEWEKFRPQTIFVSATPGPFELEETGGLVVELIIRPTGLLDPECIIKPATNQVEDLISEIQTTIAKGLRVLVTTLTKKMAEDLTTYLQELKYKSSYLHSNVHTLERLEILRDLRQGTINILVGINLLREGLDIPECGLVAILDADKEGFLRSEVSLIQTIGRAARNSEGRVILYADKITKSIDKAVSETMRRRQIQQEYNEKHGIIPQTINRTIYALTALKKIDSKLDKKQAHILFDNPAKLKAHIYKLKKAMLKAASNLEFEQATKLRDQLKNLEEAALELS.

The 158-residue stretch at 25–182 (AGLNSKKRSQ…SDLVNLQYER (158 aa)) folds into the Helicase ATP-binding domain. 38–45 (GITGSGKT) contacts ATP. Residues 91 to 114 (YYDYYQPEAYIARTDTFIEKDSSI) carry the Beta-hairpin motif. One can recognise a Helicase C-terminal domain in the interval 430-592 (QVEDLISEIQ…IIPQTINRTI (163 aa)). One can recognise a UVR domain in the interval 621-656 (KAHIYKLKKAMLKAASNLEFEQATKLRDQLKNLEEA).

Belongs to the UvrB family. In terms of assembly, forms a heterotetramer with UvrA during the search for lesions. Interacts with UvrC in an incision complex.

It localises to the cytoplasm. Its function is as follows. The UvrABC repair system catalyzes the recognition and processing of DNA lesions. A damage recognition complex composed of 2 UvrA and 2 UvrB subunits scans DNA for abnormalities. Upon binding of the UvrA(2)B(2) complex to a putative damaged site, the DNA wraps around one UvrB monomer. DNA wrap is dependent on ATP binding by UvrB and probably causes local melting of the DNA helix, facilitating insertion of UvrB beta-hairpin between the DNA strands. Then UvrB probes one DNA strand for the presence of a lesion. If a lesion is found the UvrA subunits dissociate and the UvrB-DNA preincision complex is formed. This complex is subsequently bound by UvrC and the second UvrB is released. If no lesion is found, the DNA wraps around the other UvrB subunit that will check the other stand for damage. This chain is UvrABC system protein B, found in Rickettsia canadensis (strain McKiel).